Consider the following 336-residue polypeptide: tRNA N6-adenosine threonylcarbamoyltransferase (336 aa).

His112 and His116 together coordinate Fe cation. Substrate-binding positions include 136 to 140 (LVSGG), Asp169, Gly182, and Asn276. Asp304 contributes to the Fe cation binding site.

This sequence belongs to the KAE1 / TsaD family. Fe(2+) serves as cofactor.

Its subcellular location is the cytoplasm. The enzyme catalyses L-threonylcarbamoyladenylate + adenosine(37) in tRNA = N(6)-L-threonylcarbamoyladenosine(37) in tRNA + AMP + H(+). Functionally, required for the formation of a threonylcarbamoyl group on adenosine at position 37 (t(6)A37) in tRNAs that read codons beginning with adenine. Is involved in the transfer of the threonylcarbamoyl moiety of threonylcarbamoyl-AMP (TC-AMP) to the N6 group of A37, together with TsaE and TsaB. TsaD likely plays a direct catalytic role in this reaction. The chain is tRNA N6-adenosine threonylcarbamoyltransferase from Francisella tularensis subsp. tularensis (strain FSC 198).